The primary structure comprises 550 residues: MRVLSATLLAGAASAAAPPFQQVLGAHKEYAENVIQQGADAFKPLQHLQDQFKSLSGEARQLWEEVSNYFPESMESAPLLSLPKKHTRRPDSHWDYHVSGAEVQDIWVSGAEGTKEREVDGRLEAYNLRAKKVDPSALGIDPGVKQYSGYLDDDENDKHLFYWFFESRNDPKNDPVVLWLNGGPGCSSLTGLFMELGPSSIDSKIKPVYNDFSWNNNASVIFLDQPINVGYSYSGGSVSDTVAAGKDVYALLTLFFKQFPEYATQDFHIAGESYAGHYIPVMASEILSHKKRNINLKSVLIGNGLTDGLTQYGYYRPMACGEGGYPAVLDESTCQSMDNSLSRCQSMIQACYNSESPWVCVPASIYCNNAMLGPYQRTGQNVYDIRGKCEDESNLCYKGMGYVSEYLGQESVREAVGAEVDGYDSCNFDINRNFLFNGDWFKPYHRLVPGLLEQIPVLIYAGDADFICNWLGNKAWSEALEWPGQKEFASAELEDLKIVQNEHVGKKIGQIKSHGNFTFMRIYGGGHMVPMDQPESGLEFFNRWIGGEWF.

The signal sequence occupies residues 1 to 17; that stretch reads MRVLSATLLAGAASAAA. A propeptide spanning residues 18–131 is cleaved from the precursor; sequence PPFQQVLGAH…RLEAYNLRAK (114 aa). 5 disulfide bridges follow: cysteine 186–cysteine 426, cysteine 320–cysteine 334, cysteine 344–cysteine 367, cysteine 351–cysteine 360, and cysteine 389–cysteine 396. Residue asparagine 217 is glycosylated (N-linked (GlcNAc...) asparagine). Residue serine 273 is part of the active site. Aspartate 465 is an active-site residue. An N-linked (GlcNAc...) asparagine glycan is attached at asparagine 516. Histidine 527 is a catalytic residue.

This sequence belongs to the peptidase S10 family.

It localises to the vacuole. The catalysed reaction is Release of a C-terminal amino acid with broad specificity.. Functionally, vacuolar carboxypeptidase involved in degradation of small peptides. Digests preferentially peptides containing an aliphatic or hydrophobic residue in P1' position, as well as methionine, leucine or phenylalanine in P1 position of ester substrate. This Penicillium rubens (strain ATCC 28089 / DSM 1075 / NRRL 1951 / Wisconsin 54-1255) (Penicillium chrysogenum) protein is Carboxypeptidase Y homolog A (cpyA).